Consider the following 316-residue polypeptide: WEB family protein At3g13190 (316 aa).

Coiled coils occupy residues 42-90, 119-195, and 233-266; these read WNKE…MIND, EEES…AEEH, and RDETLKTLEMSEREIEDIKAATQDALKKAEMAQE. Residues 295–316 form a disordered region; the sequence is STKEVLKSKPRSSSKEGCLVKC.

Belongs to the WEB family.

The protein is WEB family protein At3g13190 of Arabidopsis thaliana (Mouse-ear cress).